A 339-amino-acid chain; its full sequence is Protein FAM76B (339 aa).

Position 2 is an N-acetylalanine (Ala-2). Phosphoserine is present on residues Ser-22 and Ser-148. A disordered region spans residues Glu-144–Thr-243. Low complexity predominate over residues Ser-148–Ser-160. The span at His-167–Val-189 shows a compositional bias: basic residues. Position 193 is a phosphoserine (Ser-193). The residue at position 215 (Thr-215) is a Phosphothreonine. The segment covering Thr-215–Ser-224 has biased composition (basic and acidic residues). Residues Asn-228 to Thr-243 are compositionally biased toward polar residues. Residues Leu-248 to Lys-328 are a coiled coil.

The protein belongs to the FAM76 family. As to quaternary structure, interacts with HNRNPA2B1 (via C-terminus); the interaction results in retention of HNRNPA2B1 in the nucleus and inhibition of the NF-kappa-B-mediated inflammatory pathway.

It is found in the nucleus speckle. Functionally, negatively regulates the NF-kappa-B-mediated inflammatory pathway by preventing the translocation of HNRNPA2B1 from the nucleus to the cytoplasm. Inhibits the PI3K/Akt/NF-kappa-B pathway-mediated polarization of M1 macrophages by binding to and stabilizing PIK3CD mRNA, resulting in increased levels of PIK3CD protein and increased levels of phosphorylated downstream target AKT which leads to decreased NF-kappa-B signaling. The polypeptide is Protein FAM76B (Fam76b) (Mus musculus (Mouse)).